The sequence spans 172 residues: 3-phenylpropionate/cinnamic acid dioxygenase subunit beta (172 aa).

Belongs to the bacterial ring-hydroxylating dioxygenase beta subunit family. As to quaternary structure, this dioxygenase system consists of four proteins: the two subunits of the hydroxylase component (HcaE and HcaF), a ferredoxin (HcaC) and a ferredoxin reductase (HcaD).

The enzyme catalyses 3-phenylpropanoate + NADH + O2 + H(+) = 3-(cis-5,6-dihydroxycyclohexa-1,3-dien-1-yl)propanoate + NAD(+). It catalyses the reaction (E)-cinnamate + NADH + O2 + H(+) = (2E)-3-(cis-5,6-dihydroxycyclohexa-1,3-dien-1-yl)prop-2-enoate + NAD(+). It functions in the pathway aromatic compound metabolism; 3-phenylpropanoate degradation. Part of the multicomponent 3-phenylpropionate dioxygenase. Converts 3-phenylpropionic acid (PP) and cinnamic acid (CI) into 3-phenylpropionate-dihydrodiol (PP-dihydrodiol) and cinnamic acid-dihydrodiol (CI-dihydrodiol), respectively. The protein is 3-phenylpropionate/cinnamic acid dioxygenase subunit beta of Shigella boydii serotype 4 (strain Sb227).